A 562-amino-acid polypeptide reads, in one-letter code: Probable ganciclovir kinase (562 aa).

The span at 1–16 (MDNGVETPQGQKTQPI) shows a compositional bias: polar residues. Residues 1 to 32 (MDNGVETPQGQKTQPINLPPVRKKLRKHEGLG) are disordered. ATP contacts are provided by residues 201-209 (LGVGAYGKV) and Lys-218. The active-site Proton acceptor is the Asp-313.

It belongs to the protein kinase superfamily. Tyr protein kinase family. HCMV ganciclovir subfamily.

In terms of biological role, phosphorylates the antiviral nucleoside analog ganciclovir. The protein is Probable ganciclovir kinase (U69) of Homo sapiens (Human).